The following is a 1400-amino-acid chain: Bromodomain-containing protein 4 (1400 aa).

Positions M1–R58 are disordered. A compositionally biased stretch (low complexity) spans T23 to T43. Residues R58–L164 enclose the Bromo 1 domain. K99 participates in a covalent cross-link: Glycyl lysine isopeptide (Lys-Gly) (interchain with G-Cter in SUMO2). 2 disordered regions span residues A176–E353 and E461–K616. Residues P197–Q212 show a composition bias toward low complexity. A compositionally biased stretch (pro residues) spans P244 to Q267. Residues P321–P337 show a composition bias toward basic and acidic residues. In terms of domain architecture, Bromo 2 spans S349–M458. S471 bears the Phosphoserine mark. A compositionally biased stretch (low complexity) spans K479–D498. S485, S489, and S493 each carry phosphoserine; by CK2. Residues S485–S504 form an NPS region region. A Phosphoserine modification is found at S495. Phosphoserine; by CK2 is present on residues S499, S500, and S504. The tract at residues Q525–S580 is BID region. Residues K536–K554 show a composition bias toward basic residues. Residues K555 to P571 show a composition bias toward basic and acidic residues. K586 is covalently cross-linked (Glycyl lysine isopeptide (Lys-Gly) (interchain with G-Cter in SUMO2)). One can recognise an NET domain in the interval E601–Q683. S602 carries the post-translational modification Phosphoserine. Residues D606–K616 show a composition bias toward basic and acidic residues. Glycyl lysine isopeptide (Lys-Gly) (interchain with G-Cter in SUMO2) cross-links involve residues K646 and K695. A disordered region spans residues C675 to V1125. Low complexity predominate over residues S700–S713. The segment covering K725–P745 has biased composition (basic residues). 4 stretches are compositionally biased toward pro residues: residues Q748–M787, P835–S848, P883–V892, and P900–Q909. The span at M928–Q938 shows a compositional bias: low complexity. 3 stretches are compositionally biased toward pro residues: residues Q955 to P966, P975 to V1000, and Q1013 to A1037. The interval R1050 to F1400 is C-terminal (CTD) region. K1053 participates in a covalent cross-link: Glycyl lysine isopeptide (Lys-Gly) (interchain with G-Cter in SUMO2). The segment covering Q1075–H1084 has biased composition (polar residues). Positions Q1085–K1095 are enriched in low complexity. K1147 carries the post-translational modification N6-acetyllysine; alternate. K1147 is covalently cross-linked (Glycyl lysine isopeptide (Lys-Gly) (interchain with G-Cter in SUMO1); alternate). K1147 participates in a covalent cross-link: Glycyl lysine isopeptide (Lys-Gly) (interchain with G-Cter in SUMO2); alternate. 2 positions are modified to phosphoserine: S1153 and S1162. The tract at residues I1155–E1377 is disordered. Positions P1211–I1232 are enriched in basic and acidic residues. K1233 is covalently cross-linked (Glycyl lysine isopeptide (Lys-Gly) (interchain with G-Cter in SUMO2)). Residues S1237 and S1240 each carry the phosphoserine modification. Low complexity predominate over residues T1247–D1258. The segment covering S1259–E1320 has biased composition (basic and acidic residues). A compositionally biased stretch (low complexity) spans Q1321–S1357. The span at Q1361 to E1377 shows a compositional bias: basic and acidic residues.

This sequence belongs to the BET family. In terms of assembly, binds acetylated histone H4. Interacts with p53/TP53; the interaction is direct. Interacts (via CTD region) with CDK9 and CCNT1, acting as an associated component of P-TEFb complex. Interacts with RELA (when acetylated at 'Lys-310'). Interacts (via NET domain) with NSD3, CHD4, BICRA and ATAD5. The interaction with BICRA bridges BRD4 to the GBAF complex. Interacts (via NET domain) with JMJD6 (via JmjC and N-terminal domains); the interaction is stronger in presence of ssRNA and recruits JMJD6 on distal enhancers. Interacts with NSD3. Interacts with NIPBL. In terms of processing, phosphorylation by CK2 disrupt the intramolecular binding between the bromo domain 2 and the NPS region and promotes binding between the NPS and the BID regions, leading to activate the protein and promote binding to acetylated histones. In absence of phosphorylation, BRD4 does not localize to p53/TP53 target gene promoters, phosphorylation promoting recruitment to p53/TP53 target promoters.

It is found in the nucleus. The protein resides in the chromosome. In terms of biological role, chromatin reader protein that recognizes and binds acetylated histones and plays a key role in transmission of epigenetic memory across cell divisions and transcription regulation. Remains associated with acetylated chromatin throughout the entire cell cycle and provides epigenetic memory for postmitotic G1 gene transcription by preserving acetylated chromatin status and maintaining high-order chromatin structure. During interphase, plays a key role in regulating the transcription of signal-inducible genes by associating with the P-TEFb complex and recruiting it to promoters. Also recruits P-TEFb complex to distal enhancers, so called anti-pause enhancers in collaboration with JMJD6. BRD4 and JMJD6 are required to form the transcriptionally active P-TEFb complex by displacing negative regulators such as HEXIM1 and 7SKsnRNA complex from P-TEFb, thereby transforming it into an active form that can then phosphorylate the C-terminal domain (CTD) of RNA polymerase II. Regulates differentiation of naive CD4(+) T-cells into T-helper Th17 by promoting recruitment of P-TEFb to promoters. Promotes phosphorylation of 'Ser-2' of the C-terminal domain (CTD) of RNA polymerase II. According to a report, directly acts as an atypical protein kinase and mediates phosphorylation of 'Ser-2' of the C-terminal domain (CTD) of RNA polymerase II; these data however need additional evidences in vivo. In addition to acetylated histones, also recognizes and binds acetylated RELA, leading to further recruitment of the P-TEFb complex and subsequent activation of NF-kappa-B. Also acts as a regulator of p53/TP53-mediated transcription: following phosphorylation by CK2, recruited to p53/TP53 specific target promoters. The protein is Bromodomain-containing protein 4 (Brd4) of Mus musculus (Mouse).